Reading from the N-terminus, the 237-residue chain is Type II secretion system protein J (237 aa).

A propeptide spans 1-6 (MRLQRG) (leader sequence). F7 bears the N-methylphenylalanine mark. The helical transmembrane segment at 7–29 (FTLLELLIAIAIFALLALATYRM) threads the bilayer. The interval 203 to 237 (PLKQDQPQGQPGGENGENGEGGVPQPPEGMPGAPE) is disordered. Residues 212–224 (QPGGENGENGEGG) show a composition bias toward gly residues. The span at 226–237 (PQPPEGMPGAPE) shows a compositional bias: pro residues.

The protein belongs to the GSP J family. Type II secretion is composed of four main components: the outer membrane complex, the inner membrane complex, the cytoplasmic secretion ATPase and the periplasm-spanning pseudopilus. Forms the tip of the type II pseudopilus by interacting with XcpV, XcpU and XcpX. Interacts with core component XcpT. Cleaved by prepilin peptidase. In terms of processing, methylated by prepilin peptidase at the amino group of the N-terminal phenylalanine once the leader sequence is cleaved by prepilin peptidase.

It is found in the cell inner membrane. Its function is as follows. Component of the type II secretion system required for the energy-dependent secretion of extracellular factors such as proteases and toxins from the periplasm. Part of the pseudopilus tip complex that is critical for the recognition and binding of secretion substrates. Type II pseudopilus confers increased bacterial adhesive capabilities. This chain is Type II secretion system protein J (xcpW), found in Pseudomonas aeruginosa (strain ATCC 15692 / DSM 22644 / CIP 104116 / JCM 14847 / LMG 12228 / 1C / PRS 101 / PAO1).